We begin with the raw amino-acid sequence, 226 residues long: DELTA-thalatoxin-Avl1b (226 aa).

Residues 1–21 form the signal peptide; sequence MRHFVVFLYMFLALSIPTAFA. A propeptide spanning residues 22 to 45 is cleaved from the precursor; that stretch reads KKHIVTKKGNHQDITNDNEGENAE. Residues 50 to 59 form a plays an important role in the hemolytic activity region; that stretch reads AVAGAVIAGG. Residues 58-77 are N-terminal region; that stretch reads GGELALKILTKILDEIGKID. S101, V134, S152, P154, Y180, and Y184 together coordinate phosphocholine. The tract at residues 152–167 is trp-rich region, which is important for the binding to lipid membrane; it reads SVPFDYNLYTNWWNVK. The Cell attachment site, crucial for protein stability signature appears at 191–193; that stretch reads KPS.

This sequence belongs to the actinoporin family. Sea anemone subfamily. As to quaternary structure, octamer or nonamer in membranes. Monomer in the soluble state.

The protein resides in the secreted. It localises to the nematocyst. The protein localises to the target cell membrane. Functionally, pore-forming protein that forms cations-selective hydrophilic pores of around 1 nm and causes cytolysis. Pore formation is a multi-step process that involves specific recognition of membrane sphingomyelin (but neither cholesterol nor phosphatidylcholine) using aromatic rich region and adjacent phosphocholine (POC) binding site, firm binding to the membrane (mainly driven by hydrophobic interactions) accompanied by the transfer of the N-terminal region to the lipid-water interface and finally pore formation after oligomerization of monomers. In Actineria villosa (Okinawan sea anemone), this protein is DELTA-thalatoxin-Avl1b.